The sequence spans 180 residues: Adenine phosphoribosyltransferase (180 aa).

This sequence belongs to the purine/pyrimidine phosphoribosyltransferase family. Homodimer.

The protein localises to the cytoplasm. The enzyme catalyses AMP + diphosphate = 5-phospho-alpha-D-ribose 1-diphosphate + adenine. The protein operates within purine metabolism; AMP biosynthesis via salvage pathway; AMP from adenine: step 1/1. In terms of biological role, catalyzes a salvage reaction resulting in the formation of AMP, that is energically less costly than de novo synthesis. This Actinobacillus succinogenes (strain ATCC 55618 / DSM 22257 / CCUG 43843 / 130Z) protein is Adenine phosphoribosyltransferase.